Here is a 63-residue protein sequence, read N- to C-terminus: Probable rubredoxin (63 aa).

Residues 11 to 62 (MKRYKCRVCGYIYDPEKGEPRTDTPPGTPFEDLPETWRCPSCGAKKKMFKPL) enclose the Rubredoxin-like domain. Fe cation-binding residues include C16, C19, C49, and C52.

The protein belongs to the rubredoxin family. Fe(3+) serves as cofactor.

Rubredoxin is a small nonheme, iron protein lacking acid-labile sulfide. Its single Fe, chelated to 4 Cys, functions as an electron acceptor and may also stabilize the conformation of the molecule. The polypeptide is Probable rubredoxin (Methanothermobacter thermautotrophicus (strain ATCC 29096 / DSM 1053 / JCM 10044 / NBRC 100330 / Delta H) (Methanobacterium thermoautotrophicum)).